We begin with the raw amino-acid sequence, 109 residues long: Small ribosomal subunit protein eS25 (109 aa).

Residues 1–36 (MGGASKKPISTVEKRMKKMAEEQQKKQQKRATTKTG) are disordered. Residues 12-25 (VEKRMKKMAEEQQK) show a composition bias toward basic and acidic residues.

The protein belongs to the eukaryotic ribosomal protein eS25 family.

This Sulfurisphaera tokodaii (strain DSM 16993 / JCM 10545 / NBRC 100140 / 7) (Sulfolobus tokodaii) protein is Small ribosomal subunit protein eS25 (rps25e).